The primary structure comprises 216 residues: MNYPHPIIAREGWPFIAIAAVVALLIHAVGGFGLAWPFWLLLVFVVQFFRDPPRAVPTQANAVLCPADGRIVAVETAHDPYADREALKISVFMNVFNVHSQRSPVDGAVQKVEYFPGAFLNAALDKASAENERNAVVIQTGAGHTVTAVQIAGLVARRILCYVRAGEPLSRGQRYGFIRFGSRVDVYLPKGSRARVSIGEKVSASSTILAELPEQP.

The active-site Schiff-base intermediate with substrate; via pyruvic acid is the Ser-182. Ser-182 bears the Pyruvic acid (Ser); by autocatalysis mark.

This sequence belongs to the phosphatidylserine decarboxylase family. PSD-A subfamily. Heterodimer of a large membrane-associated beta subunit and a small pyruvoyl-containing alpha subunit. Requires pyruvate as cofactor. Is synthesized initially as an inactive proenzyme. Formation of the active enzyme involves a self-maturation process in which the active site pyruvoyl group is generated from an internal serine residue via an autocatalytic post-translational modification. Two non-identical subunits are generated from the proenzyme in this reaction, and the pyruvate is formed at the N-terminus of the alpha chain, which is derived from the carboxyl end of the proenzyme. The post-translation cleavage follows an unusual pathway, termed non-hydrolytic serinolysis, in which the side chain hydroxyl group of the serine supplies its oxygen atom to form the C-terminus of the beta chain, while the remainder of the serine residue undergoes an oxidative deamination to produce ammonia and the pyruvoyl prosthetic group on the alpha chain.

The protein resides in the cell membrane. It catalyses the reaction a 1,2-diacyl-sn-glycero-3-phospho-L-serine + H(+) = a 1,2-diacyl-sn-glycero-3-phosphoethanolamine + CO2. The protein operates within phospholipid metabolism; phosphatidylethanolamine biosynthesis; phosphatidylethanolamine from CDP-diacylglycerol: step 2/2. Functionally, catalyzes the formation of phosphatidylethanolamine (PtdEtn) from phosphatidylserine (PtdSer). This Burkholderia mallei (strain NCTC 10247) protein is Phosphatidylserine decarboxylase proenzyme.